The primary structure comprises 126 residues: Holo-[acyl-carrier-protein] synthase (126 aa).

Residues aspartate 9 and glutamate 58 each contribute to the Mg(2+) site.

The protein belongs to the P-Pant transferase superfamily. AcpS family. Mg(2+) serves as cofactor.

It is found in the cytoplasm. It carries out the reaction apo-[ACP] + CoA = holo-[ACP] + adenosine 3',5'-bisphosphate + H(+). In terms of biological role, transfers the 4'-phosphopantetheine moiety from coenzyme A to a Ser of acyl-carrier-protein. The chain is Holo-[acyl-carrier-protein] synthase from Aliivibrio salmonicida (strain LFI1238) (Vibrio salmonicida (strain LFI1238)).